A 333-amino-acid chain; its full sequence is Extracellular globin (333 aa).

An N-terminal signal peptide occupies residues 1-18; the sequence is MHSSIVLAIVLFVAIASA. 2 consecutive Globin domains span residues 25–167 and 174–318; these read CMKS…HHGR and CMNS…KHAK. Heme b contacts are provided by Gln-82 and His-114. N-linked (GlcNAc...) asparagine glycosylation occurs at Asn-216. Residues Gln-231 and His-263 each contribute to the heme b site. The interval 314 to 333 is disordered; that stretch reads DKHAKAEKDHHEGEHKEEHH.

This sequence belongs to the globin family. In terms of assembly, homooctamer.

The protein localises to the secreted. The protein resides in the extracellular space. The polypeptide is Extracellular globin (Pseudoterranova decipiens (Sealworm)).